Reading from the N-terminus, the 354-residue chain is Protein RecA (354 aa).

Residue 65–72 participates in ATP binding; sequence GPESSGKT.

Belongs to the RecA family.

The protein localises to the cytoplasm. In terms of biological role, can catalyze the hydrolysis of ATP in the presence of single-stranded DNA, the ATP-dependent uptake of single-stranded DNA by duplex DNA, and the ATP-dependent hybridization of homologous single-stranded DNAs. It interacts with LexA causing its activation and leading to its autocatalytic cleavage. The chain is Protein RecA from Pseudomonas savastanoi pv. phaseolicola (strain 1448A / Race 6) (Pseudomonas syringae pv. phaseolicola (strain 1448A / Race 6)).